The primary structure comprises 321 residues: MQIKDEILSLLKRGKNLLAFSYGSDSSVLFYLLMQEKIDFDLVMINYKTRKNSDLEELKAKELALKFHKKIFIKHAPKFQSNFEKKARDFRYDFFEKICLEQGYDHLILAHHLNDQFEWFLMQLSRGAGLAEILGMQECEKRSNYTLLRPLLFISKDEISSFLKEKDIFYFHDESNENEKYFRNYIRKNFSNAFVSEFHQGLKRSFSYLDEDRKKLYDFENIKEIQGLLICPKNESLIARAVKMKGLLLSTAQRKELLKGDCVLGGKIALAYKNEQAIVFEYETCQKLPKNFKEECRIAKIPRLLRAYLYNHKIDISSLSF.

21-26 (SYGSDS) is an ATP binding site.

Belongs to the tRNA(Ile)-lysidine synthase family.

The protein localises to the cytoplasm. The enzyme catalyses cytidine(34) in tRNA(Ile2) + L-lysine + ATP = lysidine(34) in tRNA(Ile2) + AMP + diphosphate + H(+). In terms of biological role, ligates lysine onto the cytidine present at position 34 of the AUA codon-specific tRNA(Ile) that contains the anticodon CAU, in an ATP-dependent manner. Cytidine is converted to lysidine, thus changing the amino acid specificity of the tRNA from methionine to isoleucine. In Campylobacter jejuni subsp. jejuni serotype O:2 (strain ATCC 700819 / NCTC 11168), this protein is tRNA(Ile)-lysidine synthase.